Consider the following 494-residue polypeptide: Integrin beta-like protein 1 (494 aa).

The first 23 residues, 1 to 23 (MRPPGFRNFLLLASSLLFAGLSA), serve as a signal peptide directing secretion. Cystine bridges form between Cys-40–Cys-71, Cys-51–Cys-69, Cys-63–Cys-74, Cys-76–Cys-89, Cys-91–Cys-112, Cys-96–Cys-110, Cys-104–Cys-115, Cys-117–Cys-126, Cys-132–Cys-159, Cys-143–Cys-157, Cys-151–Cys-162, Cys-164–Cys-178, Cys-180–Cys-202, Cys-185–Cys-200, Cys-194–Cys-205, Cys-207–Cys-216, Cys-220–Cys-247, Cys-231–Cys-245, Cys-239–Cys-250, Cys-252–Cys-269, Cys-271–Cys-296, Cys-276–Cys-294, Cys-288–Cys-299, Cys-301–Cys-310, Cys-316–Cys-343, Cys-327–Cys-341, Cys-335–Cys-346, Cys-348–Cys-361, Cys-363–Cys-384, Cys-368–Cys-382, Cys-376–Cys-387, Cys-389–Cys-398, Cys-404–Cys-431, Cys-415–Cys-429, Cys-423–Cys-434, Cys-436–Cys-448, Cys-450–Cys-471, Cys-455–Cys-469, Cys-463–Cys-474, and Cys-476–Cys-485. 10 I-EGF domains span residues 40–90 (CRLS…PLCE), 91–127 (CHEW…DACQ), 132–179 (CDLT…KFCE), 180–217 (CDDR…DKCE), 220–270 (CDIT…DTCE), 271–311 (CDER…KKCE), 316–362 (CTLS…KTCE), 363–399 (CDDR…KLCQ), 404–449 (CNMT…EFCD), and 450–486 (CDDR…NACE). One copy of the I repeat lies at 51-95 (CRAPGQPPGAALCHGRGRCDCGVCICHVTEPGMFFGPLCECHEWV). Positions 51 to 494 (CRAPGQPPGA…CEIWLGSEYP (444 aa)) are cysteine-rich tandem repeats. The stretch at 96-142 (CETYDGSTCAGHGKCDCGKCKCDQGWYGDACQYPTNCDLTKKKSNQM) is one II repeat. Residues 143–184 (CKNSQDIICSNAGTCHCGRCKCDNSDGSGLVYGKFCECDDRE) form an III repeat. One copy of the IV repeat lies at 185-230 (CIDDETEEICGGHGKCYCGNCYCKAGWHGDKCEFQCDITPWESKRR). The stretch at 231-275 (CTSPDGKICSNRGTCVCGECTCHDVDPTGDWGDIHGDTCECDERD) is one V repeat. The VI repeat unit spans residues 276 to 326 (CRAVYDRYSDDFCSGHGQCNCGRCDCKAGWYGKKCEHPQSCTLSAEESIRK). A VII repeat occupies 327 to 367 (CQGSSDLPCSGRGKCECGKCTCYPPGDRRVYGKTCECDDRR). One copy of the VIII repeat lies at 368–414 (CEDLDGVVCGGHGTCSCGRCVCERGWFGKLCQHPRKCNMTEEQSKNL). An N-linked (GlcNAc...) asparagine glycan is attached at Asn-405. Residues 415-454 (CESADGILCSGKGSCHCGKCICSAEEWYISGEFCDCDDRD) form an IX repeat. One copy of the X repeat lies at 455–494 (CDKHDGLICTGNGICSCGNCECWDGWNGNACEIWLGSEYP).

Widely expressed in many tissues, but readily detectable only in aorta.

The protein localises to the secreted. The chain is Integrin beta-like protein 1 (ITGBL1) from Homo sapiens (Human).